Here is a 435-residue protein sequence, read N- to C-terminus: Phospholipase A1 EG1, chloroplastic/mitochondrial (435 aa).

Residues 1 to 31 constitute a chloroplast and mitochondrion transit peptide; it reads MTLPRQCAAACRTGGGGGGVVRCRAVAAAGG. Residues 264–268 carry the GXSXG motif; sequence GHSMG. The active-site Acyl-ester intermediate is Ser266. Residues Asp324 and His371 each act as charge relay system in the active site.

The protein belongs to the AB hydrolase superfamily. Lipase family.

Its subcellular location is the mitochondrion. The protein localises to the plastid. It localises to the chloroplast. It catalyses the reaction a 1,2-diacyl-sn-glycero-3-phosphocholine + H2O = a 2-acyl-sn-glycero-3-phosphocholine + a fatty acid + H(+). In terms of biological role, phospholipase that releases free fatty acids from phospholipids. Catalyzes the initial step of jasmonate (JA) biosynthesis. Required for the biosynthesis of endogenous JA in seedling, inflorescence and spikelets. Not essential for JA biosynthesis after wounding. Mediates spikelet development and specification of empty-glume identity. Functions in a high temperature-dependent manner to maintain floral developmental robustness under heat stress conditions. Functions by safeguarding the expression of several floral identity genes, such as MADS1, MADS6 and G1. The protein is Phospholipase A1 EG1, chloroplastic/mitochondrial of Oryza sativa subsp. indica (Rice).